The sequence spans 214 residues: MIKVLVVDDHDLVRTGITRMLADIEGLQVVGQADCGEDCLKLARELKPDVVLMDVKMPGIGGLEATRKLLRSQPDIKVVVVTVCEEDPFPTRLMQAGAAGYMTKGAGLEEMVQAIRQVFAGQRYISPQIAQQLALKSFQPQQHDSPFDSLSEREIQIALMIANCHKVQSISDKLCLSPKTVNTYRYRIFEKLSITSDVELALLAVRHGMVDAAS.

The Response regulatory domain maps to 3 to 119 (KVLVVDDHDL…EMVQAIRQVF (117 aa)). Residue D54 is modified to 4-aspartylphosphate. The HTH luxR-type domain maps to 143–208 (HDSPFDSLSE…ELALLAVRHG (66 aa)). The H-T-H motif DNA-binding region spans 167–186 (VQSISDKLCLSPKTVNTYRY).

In terms of biological role, positively controls the production of the autoinducer N-butyryl-homoserine lactone and the formation of the virulence factors pyocyanine, cyanide, and lipase. This chain is Response regulator GacA (gacA), found in Pseudomonas aeruginosa (strain ATCC 15692 / DSM 22644 / CIP 104116 / JCM 14847 / LMG 12228 / 1C / PRS 101 / PAO1).